A 136-amino-acid polypeptide reads, in one-letter code: Large ribosomal subunit protein uL16 (136 aa).

This sequence belongs to the universal ribosomal protein uL16 family. As to quaternary structure, part of the 50S ribosomal subunit.

Binds 23S rRNA and is also seen to make contacts with the A and possibly P site tRNAs. The sequence is that of Large ribosomal subunit protein uL16 from Histophilus somni (strain 129Pt) (Haemophilus somnus).